The sequence spans 297 residues: Oxidoreductase R1 (297 aa).

This sequence belongs to the asaB hydroxylase/desaturase family.

It participates in secondary metabolite biosynthesis. Its function is as follows. Oxidoreductase; part of the gene cluster that mediates the biosynthesis of squalestatin S1 (SQS1, also known as zaragozic acid A), a heavily oxidized fungal polyketide that offers potent cholesterol lowering activity by targeting squalene synthase (SS). SQS1 is composed of a 2,8-dioxobicyclic[3.2.1]octane-3,4,5-tricarboxyclic acid core that is connected to two lipophilic polyketide arms. These initial steps feature the priming of an unusual benzoic acid starter unit onto the highly reducing polyketide synthase pks2, followed by oxaloacetate extension and product release to generate a tricarboxylic acid containing product. The phenylalanine ammonia lyase (PAL) M7 and the acyl-CoA ligase M9 are involved in transforming phenylalanine into benzoyl-CoA. The citrate synthase-like protein R3 is involved in connecting the C-alpha-carbons of the hexaketide chain and oxaloacetate to afford the tricarboxylic acid unit. The potential hydrolytic enzymes, M8 and M10, are in close proximity to pks2 and may participate in product release. On the other side, the tetraketide arm is synthesized by a the squalestatin tetraketide synthase pks1 and enzymatically esterified to the core in the last biosynthetic step, by the acetyltransferase M4. The biosynthesis of the tetraketide must involve 3 rounds of chain extension. After the first and second rounds methyl-transfer occurs, and in all rounds of extension the ketoreductase and dehydratase are active. The enoyl reductase and C-MeT of pks1 are not active in the final round of extension. The acetyltransferase M4 appears to have a broad substrate selectivity for its acyl CoA substrate, allowing the in vitro synthesis of novel squalestatins. The biosynthesis of SQS1 requires several oxidative steps likely performed by oxidoreductases M1, R1 and R2. Finally, in support of the identification of the cluster as being responsible for SQS1 production, the cluster contains a gene encoding a putative squalene synthase (SS) R6, suggesting a likely mechanism for self-resistance. The chain is Oxidoreductase R1 from Phoma sp. (strain ATCC 20986 / MF5453).